Reading from the N-terminus, the 462-residue chain is MKEKLRLYHTNDLHSHFENWPKIVDYIEQKRKEHQSDGEETLVFDIGDHLDRFQFVTEATFGKANVDLLNRLHIDGAAIGNNEGITLPHEELAALYDHAEFPVIVSNLFDKNGNRPSWAVPYHIKSLKNGMSIAFLGVTVPYYPVYDKLGWTVTDALESIKETILEVKGQADIIVLLSHLGILDDQAVAEAVPEIDVILESHTHHLLEDGQVVNGVLLASAEKYGHYVGCVEITVDSVQRSINSKTASVQNMAEWTGESAETKAFLNEKEREAEEKLSDAVAELAQDAEVKWFEESELPLLLAYALKEWCETDISMVNSGVILGPLKAGPVTKLDLHRICPHPINPVAVRLTGEELKETIVHAASEQMEQLRIKGLGFRGEVMGKMVYAGVEVETKRLDDGITHVTRITLNGEDIEKHKQYSVAVLDMFTLGKLFPLIRDAAEKEYFMPEFLRDLLAWKLAQ.

Positions 12, 14, 48, 81, 179, and 202 each coordinate a divalent metal cation. Residues 258–291 (ESAETKAFLNEKEREAEEKLSDAVAELAQDAEVK) adopt a coiled-coil conformation.

The protein belongs to the metallophosphoesterase superfamily. A divalent metal cation serves as cofactor.

This is an uncharacterized protein from Bacillus subtilis (strain 168).